Reading from the N-terminus, the 812-residue chain is Phospholipase D alpha 1 (812 aa).

A C2 domain is found at methionine 1–leucine 130. A Ca(2+)-binding site is contributed by aspartate 190. The PLD phosphodiesterase 1 domain occupies threonine 330 to arginine 368. Catalysis depends on residues histidine 335, lysine 337, and aspartate 342. An a 1,2-diacyl-sn-glycero-3-phosphate-binding site is contributed by histidine 335. The Ca(2+) site is built by histidine 374 and histidine 408. Residues glutamine 524 and histidine 663 each contribute to the a 1,2-diacyl-sn-glycero-3-phosphate site. Residues phenylalanine 658–serine 685 enclose the PLD phosphodiesterase 2 domain. Active-site residues include histidine 663, lysine 665, and aspartate 670. A Ca(2+)-binding site is contributed by glutamate 724.

The protein belongs to the phospholipase D family. C2-PLD subfamily. In terms of assembly, monomer. The cofactor is Ca(2+).

It catalyses the reaction a 1,2-diacyl-sn-glycero-3-phosphocholine + H2O = a 1,2-diacyl-sn-glycero-3-phosphate + choline + H(+). Its function is as follows. Hydrolyzes glycerol-phospholipids at the terminal phosphodiesteric bond. Plays an important role in various cellular processes. This is Phospholipase D alpha 1 (PLD1) from Zea mays (Maize).